Reading from the N-terminus, the 422-residue chain is Putative serpin-Z8 (422 aa).

The interval 369–393 (GTVAAAATMTRMLPSGVPPPPVDFV) is RCL.

Belongs to the serpin family.

In terms of biological role, probable serine protease inhibitor. The protein is Putative serpin-Z8 of Oryza sativa subsp. japonica (Rice).